We begin with the raw amino-acid sequence, 137 residues long: Phospholipase A2 group V (137 aa).

A signal peptide spans 1-20 (MKGLLTLAWFLACSVPAVPG). 6 disulfides stabilise this stretch: Cys46-Cys137, Cys48-Cys64, Cys63-Cys117, Cys70-Cys110, Cys79-Cys103, and Cys97-Cys108. Ca(2+)-binding residues include Tyr47, Gly49, and Gly51. His67 is an active-site residue. Asp68 is a binding site for Ca(2+). The active site involves Asp111.

It belongs to the phospholipase A2 family. Ca(2+) serves as cofactor. Post-translationally, this enzyme lacks one of the seven disulfide bonds found in similar PA2 proteins. As to expression, expressed in peritoneal macrophages (at protein level). Expressed in heart, skeletal muscle and white adipose tissue.

It is found in the secreted. The protein resides in the cell membrane. The protein localises to the cytoplasmic vesicle. It localises to the phagosome. Its subcellular location is the recycling endosome. It is found in the golgi apparatus. The protein resides in the cis-Golgi network. The protein localises to the trans-Golgi network. The enzyme catalyses a 1,2-diacyl-sn-glycero-3-phosphocholine + H2O = a 1-acyl-sn-glycero-3-phosphocholine + a fatty acid + H(+). The catalysed reaction is 1-hexadecanoyl-2-(9Z-octadecenoyl)-sn-glycero-3-phosphocholine + H2O = 1-hexadecanoyl-sn-glycero-3-phosphocholine + (9Z)-octadecenoate + H(+). It catalyses the reaction 1-hexadecanoyl-2-(5Z,8Z,11Z,14Z-eicosatetraenoyl)-sn-glycero-3-phosphocholine + H2O = 1-hexadecanoyl-sn-glycero-3-phosphocholine + (5Z,8Z,11Z,14Z)-eicosatetraenoate + H(+). It carries out the reaction 1-hexadecanoyl-2-(9Z,12Z-octadecadienoyl)-sn-glycero-3-phosphoethanolamine + H2O = 1-hexadecanoyl-sn-glycero-3-phosphoethanolamine + (9Z,12Z)-octadecadienoate + H(+). The enzyme catalyses 1-hexadecanoyl-2-(5Z,8Z,11Z,14Z-eicosatetraenoyl)-sn-glycero-3-phosphoethanolamine + H2O = 1-hexadecanoyl-sn-glycero-3-phosphoethanolamine + (5Z,8Z,11Z,14Z)-eicosatetraenoate + H(+). The catalysed reaction is 1-octadecanoyl-2-(5Z,8Z,11Z,14Z-eicosatetraenoyl)-sn-glycero-3-phospho-(1D-myo-inositol) + H2O = 1-octadecanoyl-sn-glycero-3-phospho-(1D-myo-inositol) + (5Z,8Z,11Z,14Z)-eicosatetraenoate + H(+). It catalyses the reaction 1-hexadecanoyl-2-(9Z-octadecenoyl)-sn-glycero-3-phosphoglycerol + H2O = 1-hexadecanoyl-sn-glycero-3-phosphoglycerol + (9Z)-octadecenoate + H(+). It carries out the reaction N-hexadecanoyl-1,2-di-(9Z-octadecenoyl)-sn-glycero-3-phosphoethanolamine + H2O = N-hexadecanoyl-1-(9Z-octadecenoyl)-sn-glycero-3-phosphoethanolamine + (9Z)-octadecenoate + H(+). The enzyme catalyses 1'-[1,2-di-(9Z-octadecenoyl)-sn-glycero-3-phospho]-3'-[1-(9Z-octadecenoyl)-sn-glycero-3-phospho]-glycerol + H2O = 1',3'-bis-[1-(9Z-octadecenoyl)-sn-glycero-3-phospho]-glycerol + (9Z)-octadecenoate + H(+). The catalysed reaction is 1',3'-bis[1,2-di-(9Z-octadecenoyl)-sn-glycero-3-phospho]-glycerol + H2O = 1'-[1,2-di-(9Z-octadecenoyl)-sn-glycero-3-phospho]-3'-[1-(9Z-octadecenoyl)-sn-glycero-3-phospho]-glycerol + (9Z)-octadecenoate + H(+). It participates in lipid metabolism; phospholipid metabolism. It functions in the pathway lipid metabolism; leukotriene B4 biosynthesis. Its pathway is lipid metabolism; leukotriene C4 biosynthesis. Its function is as follows. Secretory calcium-dependent phospholipase A2 that primarily targets extracellular phospholipids. Hydrolyzes the ester bond of the fatty acyl group attached at sn-2 position of phospholipids (phospholipase A2 activity), preferentially releasing fatty acyl groups with a low degree of unsaturation such as oleoyl (C18:1) and linoleoyl (C18:2) groups. Hydrolyzes low-density lipoprotein (LDL) phospholipids releasing unsaturated fatty acids that drive macrophage polarization toward an M2 phenotype. May act in an autocrine and paracrine manner. Contributes to lipid remodeling of cellular membranes at different subcellular locations and generation of lipid mediators involved in pathogen clearance. Cleaves sn-2 fatty acyl chains of cardiolipin, a major component of the inner membrane of mitochondria and bacterial membranes. Promotes phagocytosis of bacteria in macrophages through production of lysophosphatidylethanolamines. Displays bactericidal activity against Gram-positive bacteria by directly hydrolyzing the phospholipids of the bacterial membrane. Promotes phagocytosis and killing of ingested fungi likely through controlling phagosome-lysosome fusion and phagosome maturation. Plays a role in biosynthesis of cysteinyl leukotrienes (CysLTs) in myeloid cells. In eosinophils, triggers perinuclear arachidonate release and LTC4 synthesis in a PLA2G4A-independent way. In neutrophils, amplifies CysLTs biosynthesis initiated by PLA2G4A. Promotes immune complex clearance in macrophages via stimulating synthesis of CysLTs, which act through CYSLTR1 to trigger phagocytosis. May regulate antigen processing in antigen-presenting cells. In pulmonary macrophages regulates IL33 production required for activation of group 2 innate lymphoid cells. May play a role in the biosynthesis of N-acyl ethanolamines that regulate energy metabolism. Hydrolyzes N-acyl phosphatidylethanolamines to N-acyl lysophosphatidylethanolamines, which are further cleaved by a lysophospholipase D to release N-acyl ethanolamines. The chain is Phospholipase A2 group V (Pla2g5) from Mus musculus (Mouse).